The sequence spans 147 residues: Small ribosomal subunit protein bS6 (147 aa).

The disordered stretch occupies residues glycine 114–valine 147. Low complexity predominate over residues alanine 119–valine 147.

Belongs to the bacterial ribosomal protein bS6 family.

Functionally, binds together with bS18 to 16S ribosomal RNA. The polypeptide is Small ribosomal subunit protein bS6 (Koribacter versatilis (strain Ellin345)).